The following is a 118-amino-acid chain: MRSAKLKFEKRRSRIRHKISQTSNRVRLSIFKSCRHIYAQIIDDSKSITIASASTLDAKIKKLKKSHCNIENAIKVGKAIATKADSAGIKEVVFDRGGYKYHGVVKALADAAREKIKF.

Belongs to the universal ribosomal protein uL18 family. In terms of assembly, part of the 50S ribosomal subunit; part of the 5S rRNA/L5/L18/L25 subcomplex. Contacts the 5S and 23S rRNAs.

Its function is as follows. This is one of the proteins that bind and probably mediate the attachment of the 5S RNA into the large ribosomal subunit, where it forms part of the central protuberance. The sequence is that of Large ribosomal subunit protein uL18 from Rickettsia canadensis (strain McKiel).